Here is a 90-residue protein sequence, read N- to C-terminus: UPF0329 protein ECU04_1650 (90 aa).

This sequence belongs to the UPF0329 family.

This chain is UPF0329 protein ECU04_1650, found in Encephalitozoon cuniculi (strain GB-M1) (Microsporidian parasite).